We begin with the raw amino-acid sequence, 54 residues long: Ovomucoid (54 aa).

A Kazal-like domain is found at 4–54 (VDCSEYPKPACTLEHRPLCGSDNKTYGNKCNFCNAVVESNGTLTLSHFGKC). 3 disulfide bridges follow: cysteine 6/cysteine 36, cysteine 14/cysteine 33, and cysteine 22/cysteine 54. Asparagine 43 carries an N-linked (GlcNAc...) asparagine glycan.

Its subcellular location is the secreted. The polypeptide is Ovomucoid (Pavo muticus (Green peafowl)).